Reading from the N-terminus, the 318-residue chain is Probable cell division protein WhiA (318 aa).

A DNA-binding region (H-T-H motif) is located at residues 276 to 310; that stretch reads TLQELGEMVESGSISKSGINHRLRKIDQIADKIRN.

Belongs to the WhiA family.

In terms of biological role, involved in cell division and chromosome segregation. This chain is Probable cell division protein WhiA, found in Exiguobacterium sibiricum (strain DSM 17290 / CCUG 55495 / CIP 109462 / JCM 13490 / 255-15).